The primary structure comprises 326 residues: Transcription initiation factor IIB (326 aa).

A TFIIB-type zinc finger spans residues 26 to 57 (DVEVCPECGSPRLIRDYRRGEFICQDCGLVIE). Residues cysteine 30, cysteine 33, cysteine 49, and cysteine 52 each coordinate Zn(2+). Repeat copies occupy residues 143-226 (SELD…TREL) and 237-318 (DYIP…ELAE).

It belongs to the TFIIB family.

Stabilizes TBP binding to an archaeal box-A promoter. Also responsible for recruiting RNA polymerase II to the pre-initiation complex (DNA-TBP-TFIIB). This Archaeoglobus fulgidus (strain ATCC 49558 / DSM 4304 / JCM 9628 / NBRC 100126 / VC-16) protein is Transcription initiation factor IIB.